We begin with the raw amino-acid sequence, 455 residues long: Zinc finger SWIM domain-containing protein 1 (455 aa).

Residues 264–288 (ASLSLAETPQDSHTPSEASAENPNT) are disordered. The SWIM-type zinc-finger motif lies at 333–375 (MSIQILEDTHTVQPQPPASCSCYFNQAFHLPCRHILAMLSARQ).

The protein is Zinc finger SWIM domain-containing protein 1 (Zswim1) of Mus musculus (Mouse).